The chain runs to 287 residues: Taxis protein CheF2 (287 aa).

In terms of assembly, interacts with chemotaxis (Che) proteins as well as flagella accessory (Fla) proteins.

Its function is as follows. Involved in taxis signal transduction. This chain is Taxis protein CheF2 (cheF2), found in Halobacterium salinarum (strain ATCC 29341 / DSM 671 / R1).